The sequence spans 223 residues: 2-C-methyl-D-erythritol 4-phosphate cytidylyltransferase (223 aa).

This sequence belongs to the IspD/TarI cytidylyltransferase family. IspD subfamily.

The enzyme catalyses 2-C-methyl-D-erythritol 4-phosphate + CTP + H(+) = 4-CDP-2-C-methyl-D-erythritol + diphosphate. Its pathway is isoprenoid biosynthesis; isopentenyl diphosphate biosynthesis via DXP pathway; isopentenyl diphosphate from 1-deoxy-D-xylulose 5-phosphate: step 2/6. In terms of biological role, catalyzes the formation of 4-diphosphocytidyl-2-C-methyl-D-erythritol from CTP and 2-C-methyl-D-erythritol 4-phosphate (MEP). In Prochlorococcus marinus (strain MIT 9515), this protein is 2-C-methyl-D-erythritol 4-phosphate cytidylyltransferase.